Reading from the N-terminus, the 88-residue chain is Acylphosphatase (88 aa).

One can recognise an Acylphosphatase-like domain in the interval 3–88 (RLVALVKGRV…EAGLKGFHVY (86 aa)). Catalysis depends on residues R18 and N36.

This sequence belongs to the acylphosphatase family.

The enzyme catalyses an acyl phosphate + H2O = a carboxylate + phosphate + H(+). This is Acylphosphatase (acyP) from Thermus thermophilus (strain ATCC BAA-163 / DSM 7039 / HB27).